The sequence spans 596 residues: Polyphenol oxidase B, chloroplastic (596 aa).

The disordered stretch occupies residues 1–23; that stretch reads MASVVCNSSSSTTTTTLKTPFTS. The N-terminal 87 residues, 1–87, are a transit peptide targeting the chloroplast; it reads MASVVCNSSS…ANAIPLAASA (87 aa). Over residues 8-23 the composition is skewed to low complexity; the sequence is SSSSTTTTTLKTPFTS. 2 disulfides stabilise this stretch: Cys98–Cys114 and Cys113–Cys182. His181, His199, His208, His329, His333, and His371 together coordinate Cu cation. A cross-link (2'-(S-cysteinyl)-histidine (Cys-His)) is located at residues 185-199; the sequence is CNGAYIIGGKELQVH.

Belongs to the tyrosinase family. The cofactor is Cu(2+).

Its subcellular location is the plastid. The protein localises to the chloroplast thylakoid lumen. It catalyses the reaction 2 catechol + O2 = 2 1,2-benzoquinone + 2 H2O. Functionally, catalyzes the oxidation of mono- and o-diphenols to o-diquinones. The protein is Polyphenol oxidase B, chloroplastic of Solanum lycopersicum (Tomato).